Reading from the N-terminus, the 104-residue chain is L-rhamnose mutarotase (104 aa).

Tyr-18 contributes to the substrate binding site. The active-site Proton donor is His-22. Substrate is bound by residues Tyr-41 and 76–77; that span reads WW.

Belongs to the rhamnose mutarotase family. Homodimer.

It is found in the cytoplasm. It carries out the reaction alpha-L-rhamnose = beta-L-rhamnose. The protein operates within carbohydrate metabolism; L-rhamnose metabolism. In terms of biological role, involved in the anomeric conversion of L-rhamnose. The protein is L-rhamnose mutarotase of Bacteroides thetaiotaomicron (strain ATCC 29148 / DSM 2079 / JCM 5827 / CCUG 10774 / NCTC 10582 / VPI-5482 / E50).